The sequence spans 559 residues: Oxygen-dependent choline dehydrogenase (559 aa).

Residue 4–33 (DYIIIGAGSAGNVLATRLTEDSDVTVLLLE) coordinates FAD. The active-site Proton acceptor is His473.

Belongs to the GMC oxidoreductase family. FAD serves as cofactor.

It catalyses the reaction choline + A = betaine aldehyde + AH2. It carries out the reaction betaine aldehyde + NAD(+) + H2O = glycine betaine + NADH + 2 H(+). It participates in amine and polyamine biosynthesis; betaine biosynthesis via choline pathway; betaine aldehyde from choline (cytochrome c reductase route): step 1/1. Its function is as follows. Involved in the biosynthesis of the osmoprotectant glycine betaine. Catalyzes the oxidation of choline to betaine aldehyde and betaine aldehyde to glycine betaine at the same rate. The polypeptide is Oxygen-dependent choline dehydrogenase (Cronobacter sakazakii (strain ATCC BAA-894) (Enterobacter sakazakii)).